Consider the following 503-residue polypeptide: Cytochrome P450 6l1 (503 aa).

A heme-binding site is contributed by Cys-438.

It belongs to the cytochrome P450 family. Requires heme as cofactor. As to expression, detected only in testes and accessory glands of male adults.

It is found in the endoplasmic reticulum membrane. The protein localises to the microsome membrane. In Blattella germanica (German cockroach), this protein is Cytochrome P450 6l1 (CYP6L1).